The sequence spans 1076 residues: Carbamoyl phosphate synthase large chain (1076 aa).

Residues 1-403 (MPKRTDIQSI…SLQKALRGLE (403 aa)) are carboxyphosphate synthetic domain. Arg129, Arg169, Gly175, Gly176, Glu208, Leu210, Glu215, Gly241, Val242, His243, Gln285, and Glu299 together coordinate ATP. The ATP-grasp 1 domain occupies 133–328 (DQAMKRIGLE…IAKIAAKLAV (196 aa)). Residues Gln285, Glu299, and Asn301 each contribute to the Mg(2+) site. Mn(2+) is bound by residues Gln285, Glu299, and Asn301. Residues 404–553 (TGNDGLDPKV…YSSYEEECEA (150 aa)) form an oligomerization domain region. Residues 554–935 (EVSDRPKIMV…AFYKAQLGAG (382 aa)) form a carbamoyl phosphate synthetic domain region. The ATP-grasp 2 domain occupies 678 to 869 (QHMVDKLGLK…LAQVAARCMA (192 aa)). 10 residues coordinate ATP: Arg714, His753, Leu755, Glu760, Gly785, Val786, His787, Ser788, Gln828, and Glu840. Mg(2+) contacts are provided by Gln828, Glu840, and Asn842. Residues Gln828, Glu840, and Asn842 each coordinate Mn(2+). In terms of domain architecture, MGS-like spans 936 to 1076 (EAIPALEGER…LQELHAGVSQ (141 aa)). Residues 936 to 1076 (EAIPALEGER…LQELHAGVSQ (141 aa)) are allosteric domain.

Belongs to the CarB family. As to quaternary structure, composed of two chains; the small (or glutamine) chain promotes the hydrolysis of glutamine to ammonia, which is used by the large (or ammonia) chain to synthesize carbamoyl phosphate. Tetramer of heterodimers (alpha,beta)4. It depends on Mg(2+) as a cofactor. Requires Mn(2+) as cofactor.

The enzyme catalyses hydrogencarbonate + L-glutamine + 2 ATP + H2O = carbamoyl phosphate + L-glutamate + 2 ADP + phosphate + 2 H(+). It catalyses the reaction hydrogencarbonate + NH4(+) + 2 ATP = carbamoyl phosphate + 2 ADP + phosphate + 2 H(+). The protein operates within amino-acid biosynthesis; L-arginine biosynthesis; carbamoyl phosphate from bicarbonate: step 1/1. It functions in the pathway pyrimidine metabolism; UMP biosynthesis via de novo pathway; (S)-dihydroorotate from bicarbonate: step 1/3. Functionally, large subunit of the glutamine-dependent carbamoyl phosphate synthetase (CPSase). CPSase catalyzes the formation of carbamoyl phosphate from the ammonia moiety of glutamine, carbonate, and phosphate donated by ATP, constituting the first step of 2 biosynthetic pathways, one leading to arginine and/or urea and the other to pyrimidine nucleotides. The large subunit (synthetase) binds the substrates ammonia (free or transferred from glutamine from the small subunit), hydrogencarbonate and ATP and carries out an ATP-coupled ligase reaction, activating hydrogencarbonate by forming carboxy phosphate which reacts with ammonia to form carbamoyl phosphate. The sequence is that of Carbamoyl phosphate synthase large chain from Halomonas eurihalina.